Consider the following 126-residue polypeptide: Penicillinase repressor (126 aa).

Positions 7–71 form a DNA-binding region, H-T-H motif; that stretch reads EISMAEWDVM…KSENIYFYSS (65 aa). The tract at residues 74–126 is important for dimerization; that stretch reads KEDDIKMKTAKTFLNKLYGGDMKSLVLNFAKNEELNNKEIEELRDILNDISKK.

This sequence belongs to the BlaI transcriptional regulatory family. As to quaternary structure, homodimer. In terms of processing, upon exposure to beta-lactams, the protease BlaR1 is activated and cleaves BlaI at a single site. This proteolytic cleavage impairs dimerization and abolishes repressor activity.

It localises to the cytoplasm. In terms of biological role, transcriptional repressor that constitutively blocks expression of beta-lactamase. Binds DNA as a dimer. This Staphylococcus aureus protein is Penicillinase repressor (blaI).